The primary structure comprises 185 residues: Lysine-rich arabinogalactan protein 17 (185 aa).

An N-terminal signal peptide occupies residues 1-21; sequence MTRNILLTVTLICIVFITVGG. A disordered region spans residues 25–160; sequence ATAPIHSPST…FSPAADDQSG (136 aa). Over residues 43–68 the composition is skewed to low complexity; sequence SPAISPAAPTPESTEAPAKTPVEAPV. Residues 69 to 88 are compositionally biased toward pro residues; sequence EAPPSPTPASTPQISPPAPS. Basic residues predominate over residues 111 to 122; sequence TKHKKKTKKHKT. Residues 135–146 show a composition bias toward pro residues; it reads PPAPPGEAPGPG. Serine 159 carries GPI-anchor amidated serine lipidation. A propeptide spans 160 to 185 (removed in mature form); sequence GAQRISVVIQMVGAAAIAWSLLVLAF.

This sequence belongs to the lysine-rich AGP family. O-glycosylated on the hydroxyproline residues. Predominantly expressed in open flowers. Also expressed in leaves and stems, and at a lower level in roots.

Its subcellular location is the cell membrane. Functionally, proteoglycan that seems to be implicated in diverse developmental roles such as differentiation, cell-cell recognition, embryogenesis and programmed cell death. This Arabidopsis thaliana (Mouse-ear cress) protein is Lysine-rich arabinogalactan protein 17 (AGP17).